The sequence spans 118 residues: Holo-[acyl-carrier-protein] synthase (118 aa).

2 residues coordinate Mg(2+): D9 and E52.

The protein belongs to the P-Pant transferase superfamily. AcpS family. Mg(2+) is required as a cofactor.

The protein resides in the cytoplasm. The enzyme catalyses apo-[ACP] + CoA = holo-[ACP] + adenosine 3',5'-bisphosphate + H(+). Functionally, transfers the 4'-phosphopantetheine moiety from coenzyme A to a Ser of acyl-carrier-protein. The chain is Holo-[acyl-carrier-protein] synthase from Frankia alni (strain DSM 45986 / CECT 9034 / ACN14a).